We begin with the raw amino-acid sequence, 258 residues long: Imidazole glycerol phosphate synthase subunit HisF (258 aa).

Residues Asp12 and Asp131 contribute to the active site.

This sequence belongs to the HisA/HisF family. Heterodimer of HisH and HisF.

Its subcellular location is the cytoplasm. It catalyses the reaction 5-[(5-phospho-1-deoxy-D-ribulos-1-ylimino)methylamino]-1-(5-phospho-beta-D-ribosyl)imidazole-4-carboxamide + L-glutamine = D-erythro-1-(imidazol-4-yl)glycerol 3-phosphate + 5-amino-1-(5-phospho-beta-D-ribosyl)imidazole-4-carboxamide + L-glutamate + H(+). Its pathway is amino-acid biosynthesis; L-histidine biosynthesis; L-histidine from 5-phospho-alpha-D-ribose 1-diphosphate: step 5/9. In terms of biological role, IGPS catalyzes the conversion of PRFAR and glutamine to IGP, AICAR and glutamate. The HisF subunit catalyzes the cyclization activity that produces IGP and AICAR from PRFAR using the ammonia provided by the HisH subunit. The polypeptide is Imidazole glycerol phosphate synthase subunit HisF (Corynebacterium diphtheriae (strain ATCC 700971 / NCTC 13129 / Biotype gravis)).